A 478-amino-acid chain; its full sequence is Transposase for insertion sequence element IS231B (478 aa).

This sequence belongs to the transposase 11 family.

Its function is as follows. Involved in the transposition of the insertion sequence. This is Transposase for insertion sequence element IS231B from Bacillus thuringiensis subsp. berliner.